The sequence spans 242 residues: Ubiquinone/menaquinone biosynthesis C-methyltransferase UbiE (242 aa).

S-adenosyl-L-methionine contacts are provided by residues threonine 69, aspartate 87, and 114–115; that span reads NA.

It belongs to the class I-like SAM-binding methyltransferase superfamily. MenG/UbiE family.

The enzyme catalyses a 2-demethylmenaquinol + S-adenosyl-L-methionine = a menaquinol + S-adenosyl-L-homocysteine + H(+). The catalysed reaction is a 2-methoxy-6-(all-trans-polyprenyl)benzene-1,4-diol + S-adenosyl-L-methionine = a 5-methoxy-2-methyl-3-(all-trans-polyprenyl)benzene-1,4-diol + S-adenosyl-L-homocysteine + H(+). It participates in quinol/quinone metabolism; menaquinone biosynthesis; menaquinol from 1,4-dihydroxy-2-naphthoate: step 2/2. The protein operates within cofactor biosynthesis; ubiquinone biosynthesis. Functionally, methyltransferase required for the conversion of demethylmenaquinol (DMKH2) to menaquinol (MKH2) and the conversion of 2-polyprenyl-6-methoxy-1,4-benzoquinol (DDMQH2) to 2-polyprenyl-3-methyl-6-methoxy-1,4-benzoquinol (DMQH2). In Zymomonas mobilis subsp. mobilis (strain ATCC 31821 / ZM4 / CP4), this protein is Ubiquinone/menaquinone biosynthesis C-methyltransferase UbiE.